Consider the following 500-residue polypeptide: Glycerol kinase (500 aa).

Thr-13 is a binding site for ADP. 3 residues coordinate ATP: Thr-13, Thr-14, and Ser-15. Thr-13 is a sn-glycerol 3-phosphate binding site. Residue Arg-17 coordinates ADP. 4 residues coordinate sn-glycerol 3-phosphate: Arg-83, Glu-84, Tyr-135, and Asp-245. Residues Arg-83, Glu-84, Tyr-135, Asp-245, and Gln-246 each contribute to the glycerol site. Positions 267 and 310 each coordinate ADP. ATP-binding residues include Thr-267, Gly-310, Gln-314, and Gly-411. Gly-411 and Asn-415 together coordinate ADP.

This sequence belongs to the FGGY kinase family. As to quaternary structure, homotetramer and homodimer (in equilibrium).

The catalysed reaction is glycerol + ATP = sn-glycerol 3-phosphate + ADP + H(+). It participates in polyol metabolism; glycerol degradation via glycerol kinase pathway; sn-glycerol 3-phosphate from glycerol: step 1/1. With respect to regulation, activated by phosphorylation and inhibited by fructose 1,6-bisphosphate (FBP). Its function is as follows. Key enzyme in the regulation of glycerol uptake and metabolism. Catalyzes the phosphorylation of glycerol to yield sn-glycerol 3-phosphate. The protein is Glycerol kinase of Carboxydothermus hydrogenoformans (strain ATCC BAA-161 / DSM 6008 / Z-2901).